The chain runs to 232 residues: Small ribosomal subunit protein uS3 (232 aa).

Residues 39–107 enclose the KH type-2 domain; the sequence is VRQFLTKELA…PAQINIAEVR (69 aa).

It belongs to the universal ribosomal protein uS3 family. In terms of assembly, part of the 30S ribosomal subunit. Forms a tight complex with proteins S10 and S14.

Functionally, binds the lower part of the 30S subunit head. Binds mRNA in the 70S ribosome, positioning it for translation. The chain is Small ribosomal subunit protein uS3 from Erwinia tasmaniensis (strain DSM 17950 / CFBP 7177 / CIP 109463 / NCPPB 4357 / Et1/99).